The primary structure comprises 545 residues: MAMLAGDGRQVLILPEGYQRFVGRDAQRMNIMAARVVAETVRTTLGPMGMDKMLVDEMGDVVVTNDGVTILEEMDIEHPAAKMVVEVAKTQEDEVGDGTTTAVVLAGELLHKAEDLLQQDIHPTVIARGYRMAVEKAEEILEEIAEEIDPDDEETLKKIAKTAMTGKGVEKARDYLAELVVKAVKQVAEEEDGEIVIDTDHIKLEKKEGGGLEDTELVKGMVIDKERVHPGMPRRVENAKIALLNCPIEVKETETDAEIRITDPEQLQAFIEEEERMLSEMVDKIAETGANVVFCQKGIDDLAQHYLAKKGILAVRRVKKSDMQKLARATGARIVTNIDDLSEEDLGEAEVVEEKKVAGDKMIFVEGCKDPKAVTILIRGGTEHVVDEAERAIEDAIGVVAAALEDGKVVAGGGAPEVEVARQLRDFADGVEGREQLAVEAFADALEIIPRTLAENSGLDPIDVLVQLRAKHEDGQVTAGIDVYDGDVKDMLEEGVVEPLRVKTQALASATEAAEMILRIDDVIAARELSKEEEEEEEEGGSSEF.

The protein belongs to the TCP-1 chaperonin family. Forms an oligomeric complex of eight-membered rings.

Its function is as follows. Molecular chaperone; binds unfolded polypeptides in vitro, and has a weak ATPase activity. The sequence is that of Thermosome subunit (ths) from Methanopyrus kandleri (strain AV19 / DSM 6324 / JCM 9639 / NBRC 100938).